The primary structure comprises 101 residues: Small integral membrane protein 14 (101 aa).

Residues 71 to 81 (SDRRTADDAAI) show a composition bias toward basic and acidic residues. The interval 71–101 (SDRRTADDAAIEKPTGSSDDNTPPPPPPSAM) is disordered. A compositionally biased stretch (pro residues) spans 92-101 (TPPPPPPSAM).

The protein is Small integral membrane protein 14 of Caenorhabditis elegans.